The primary structure comprises 212 residues: Peptide methionine sulfoxide reductase MsrA (212 aa).

Polar residues predominate over residues 1 to 14 (MNSIDKTQRITQSD). The tract at residues 1 to 21 (MNSIDKTQRITQSDALPGRST) is disordered. Residue cysteine 52 is part of the active site.

The protein belongs to the MsrA Met sulfoxide reductase family.

It catalyses the reaction L-methionyl-[protein] + [thioredoxin]-disulfide + H2O = L-methionyl-(S)-S-oxide-[protein] + [thioredoxin]-dithiol. The enzyme catalyses [thioredoxin]-disulfide + L-methionine + H2O = L-methionine (S)-S-oxide + [thioredoxin]-dithiol. Functionally, has an important function as a repair enzyme for proteins that have been inactivated by oxidation. Catalyzes the reversible oxidation-reduction of methionine sulfoxide in proteins to methionine. This is Peptide methionine sulfoxide reductase MsrA from Pectobacterium atrosepticum (strain SCRI 1043 / ATCC BAA-672) (Erwinia carotovora subsp. atroseptica).